The primary structure comprises 393 residues: Formate-dependent phosphoribosylglycinamide formyltransferase (393 aa).

N(1)-(5-phospho-beta-D-ribosyl)glycinamide is bound by residues 22-23 (EL) and E82. Residues R114, K155, 160–165 (SSGKGQ), 195–198 (EGFI), and E203 each bind ATP. An ATP-grasp domain is found at 119-308 (RLAAEELDLP…QFALHARAIL (190 aa)). 2 residues coordinate Mg(2+): E267 and E279. Residues D286, K356, and 363–364 (RR) contribute to the N(1)-(5-phospho-beta-D-ribosyl)glycinamide site.

This sequence belongs to the PurK/PurT family. As to quaternary structure, homodimer.

The catalysed reaction is N(1)-(5-phospho-beta-D-ribosyl)glycinamide + formate + ATP = N(2)-formyl-N(1)-(5-phospho-beta-D-ribosyl)glycinamide + ADP + phosphate + H(+). Its pathway is purine metabolism; IMP biosynthesis via de novo pathway; N(2)-formyl-N(1)-(5-phospho-D-ribosyl)glycinamide from N(1)-(5-phospho-D-ribosyl)glycinamide (formate route): step 1/1. Functionally, involved in the de novo purine biosynthesis. Catalyzes the transfer of formate to 5-phospho-ribosyl-glycinamide (GAR), producing 5-phospho-ribosyl-N-formylglycinamide (FGAR). Formate is provided by PurU via hydrolysis of 10-formyl-tetrahydrofolate. This chain is Formate-dependent phosphoribosylglycinamide formyltransferase, found in Pseudomonas putida (strain ATCC 47054 / DSM 6125 / CFBP 8728 / NCIMB 11950 / KT2440).